We begin with the raw amino-acid sequence, 190 residues long: MAQMSTSEIRGGVKVEVEAQPYTIISNEFVKPGKGQAFNRIKMKHLLTGRVIERTFKSGEKLNLADVAEEEMRMLYKESDGVIFMDEKSFEQIKISLESIGETVQWLLDDHVYEVIFYNGNAVNVEPPTFMEMVITDTSPGVRGDTASGRVLKPAILESGAKVQVPIFVEQGEKIKVDTRTGEYVSRVSS.

Belongs to the elongation factor P family.

It is found in the cytoplasm. It functions in the pathway protein biosynthesis; polypeptide chain elongation. Functionally, involved in peptide bond synthesis. Stimulates efficient translation and peptide-bond synthesis on native or reconstituted 70S ribosomes in vitro. Probably functions indirectly by altering the affinity of the ribosome for aminoacyl-tRNA, thus increasing their reactivity as acceptors for peptidyl transferase. The chain is Elongation factor P 2 (efp2) from Protochlamydia amoebophila (strain UWE25).